The sequence spans 237 residues: Aspartate/glutamate leucyltransferase (237 aa).

This sequence belongs to the R-transferase family. Bpt subfamily.

It is found in the cytoplasm. The catalysed reaction is N-terminal L-glutamyl-[protein] + L-leucyl-tRNA(Leu) = N-terminal L-leucyl-L-glutamyl-[protein] + tRNA(Leu) + H(+). The enzyme catalyses N-terminal L-aspartyl-[protein] + L-leucyl-tRNA(Leu) = N-terminal L-leucyl-L-aspartyl-[protein] + tRNA(Leu) + H(+). Functionally, functions in the N-end rule pathway of protein degradation where it conjugates Leu from its aminoacyl-tRNA to the N-termini of proteins containing an N-terminal aspartate or glutamate. The polypeptide is Aspartate/glutamate leucyltransferase (Shewanella amazonensis (strain ATCC BAA-1098 / SB2B)).